The primary structure comprises 47 residues: MWHLVVLLEELCERGINFRALAQSIFAQQWGDECCKSKTICDLKVIV.

Residues 1–47 (MWHLVVLLEELCERGINFRALAQSIFAQQWGDECCKSKTICDLKVIV) form the Resolvase/invertase-type recombinase catalytic domain.

This sequence belongs to the site-specific recombinase resolvase family.

In Escherichia coli (strain K12), this protein is Putative protein PinH (pinH).